We begin with the raw amino-acid sequence, 194 residues long: Protein GrpE (194 aa).

The interval 1–40 (MSRKHHKEQEEIQEQETISAGAAETPAEETAAIPAATEAD) is disordered. Positions 20–38 (AGAAETPAEETAAIPAATE) are enriched in low complexity.

It belongs to the GrpE family. In terms of assembly, homodimer.

The protein resides in the cytoplasm. In terms of biological role, participates actively in the response to hyperosmotic and heat shock by preventing the aggregation of stress-denatured proteins, in association with DnaK and GrpE. It is the nucleotide exchange factor for DnaK and may function as a thermosensor. Unfolded proteins bind initially to DnaJ; upon interaction with the DnaJ-bound protein, DnaK hydrolyzes its bound ATP, resulting in the formation of a stable complex. GrpE releases ADP from DnaK; ATP binding to DnaK triggers the release of the substrate protein, thus completing the reaction cycle. Several rounds of ATP-dependent interactions between DnaJ, DnaK and GrpE are required for fully efficient folding. This is Protein GrpE from Chlorobaculum tepidum (strain ATCC 49652 / DSM 12025 / NBRC 103806 / TLS) (Chlorobium tepidum).